The sequence spans 146 residues: Large ribosomal subunit protein uL11 (146 aa).

This sequence belongs to the universal ribosomal protein uL11 family. Part of the ribosomal stalk of the 50S ribosomal subunit. Interacts with L10 and the large rRNA to form the base of the stalk. L10 forms an elongated spine to which L12 dimers bind in a sequential fashion forming a multimeric L10(L12)X complex. One or more lysine residues are methylated.

In terms of biological role, forms part of the ribosomal stalk which helps the ribosome interact with GTP-bound translation factors. This chain is Large ribosomal subunit protein uL11, found in Blochmanniella floridana.